The sequence spans 693 residues: Putative tyrosinase-like protein tyr-3 (693 aa).

The first 18 residues, 1–18, serve as a signal peptide directing secretion; the sequence is MIRYIILLVYFLIFEVNS. Residues histidine 142, histidine 152, histidine 161, histidine 281, histidine 285, and histidine 308 each contribute to the Cu cation site. ShKT domains lie at 472–506, 516–550, 591–625, and 634–667; these read CFNE…CRQC, CSDR…CQKC, CYNE…CGVC, and CADY…CNTC. Intrachain disulfides connect cysteine 472-cysteine 506, cysteine 479-cysteine 499, cysteine 488-cysteine 503, cysteine 516-cysteine 550, cysteine 523-cysteine 543, cysteine 532-cysteine 547, cysteine 591-cysteine 625, cysteine 598-cysteine 618, cysteine 607-cysteine 622, cysteine 634-cysteine 667, cysteine 641-cysteine 660, and cysteine 650-cysteine 664.

This sequence belongs to the tyrosinase family. Cu(2+) is required as a cofactor.

This chain is Putative tyrosinase-like protein tyr-3 (tyr-3), found in Caenorhabditis elegans.